Here is a 1106-residue protein sequence, read N- to C-terminus: GYF domain-containing protein gyf-1 (1106 aa).

A compositionally biased stretch (polar residues) spans 1–17; that stretch reads MSSVSSAEPTAQQNFNP. Disordered stretches follow at residues 1–50, 160–370, and 383–434; these read MSSV…GGFD, GALQ…DSTV, and KAST…SAWS. Low complexity predominate over residues 30–42; sequence RGGSISSGNNRSS. Polar residues predominate over residues 162 to 180; it reads LQNGQSPTSRWAPKSSWNK. The span at 207–224 shows a compositional bias: gly residues; sequence GRGGGRIGGENGFGGATN. The span at 229-243 shows a compositional bias: polar residues; that stretch reads AAQNEDSPGTYQSKF. Positions 248-261 are enriched in gly residues; the sequence is RGGGAGSVGRGGST. Residues 306 to 322 are compositionally biased toward polar residues; that stretch reads VGSTSRTSTNAAPQSSE. 2 stretches are compositionally biased toward low complexity: residues 334–353 and 390–410; these read QRTQQQQQQQQQQSTQQQAQ and PPQQQQQQQQRSSAPVSAPSR. Positions 459–508 constitute a GYF domain; that stretch reads PVQFYYMDPTETRRGPFPKDQMNVWFKAGYFTDESLRVQRGENGEYKTIG. A coiled-coil region spans residues 584 to 746; sequence LDDHNRRLAE…ERKRAAERER (163 aa). Disordered stretches follow at residues 778 to 811, 909 to 928, 1026 to 1076, and 1087 to 1106; these read AFTGAPKQVSPSGSEESDEWISTSKEVKHTKTAP, KNSQPKIAVPAKSAPTSAKV, AGGR…DGNI, and RLNKGEIDAVPSAPVNPSRR. The segment covering 786-801 has biased composition (polar residues); that stretch reads VSPSGSEESDEWISTS. A compositionally biased stretch (low complexity) spans 1046-1057; sequence SDSNSGSNSNSG.

This Caenorhabditis elegans protein is GYF domain-containing protein gyf-1.